We begin with the raw amino-acid sequence, 575 residues long: Dihydroxy-acid dehydratase (575 aa).

Position 64 (Cys-64) interacts with [2Fe-2S] cluster. Residue Asp-96 participates in Mg(2+) binding. Cys-137 lines the [2Fe-2S] cluster pocket. Positions 138 and 139 each coordinate Mg(2+). N6-carboxylysine is present on Lys-139. Cys-214 lines the [2Fe-2S] cluster pocket. A Mg(2+)-binding site is contributed by Glu-465. The active-site Proton acceptor is the Ser-491.

This sequence belongs to the IlvD/Edd family. As to quaternary structure, homodimer. [2Fe-2S] cluster is required as a cofactor. The cofactor is Mg(2+).

It carries out the reaction (2R)-2,3-dihydroxy-3-methylbutanoate = 3-methyl-2-oxobutanoate + H2O. The catalysed reaction is (2R,3R)-2,3-dihydroxy-3-methylpentanoate = (S)-3-methyl-2-oxopentanoate + H2O. It participates in amino-acid biosynthesis; L-isoleucine biosynthesis; L-isoleucine from 2-oxobutanoate: step 3/4. The protein operates within amino-acid biosynthesis; L-valine biosynthesis; L-valine from pyruvate: step 3/4. In terms of biological role, functions in the biosynthesis of branched-chain amino acids. Catalyzes the dehydration of (2R,3R)-2,3-dihydroxy-3-methylpentanoate (2,3-dihydroxy-3-methylvalerate) into 2-oxo-3-methylpentanoate (2-oxo-3-methylvalerate) and of (2R)-2,3-dihydroxy-3-methylbutanoate (2,3-dihydroxyisovalerate) into 2-oxo-3-methylbutanoate (2-oxoisovalerate), the penultimate precursor to L-isoleucine and L-valine, respectively. The protein is Dihydroxy-acid dehydratase of Mycobacterium bovis (strain ATCC BAA-935 / AF2122/97).